Here is a 192-residue protein sequence, read N- to C-terminus: GTP cyclohydrolase-2 (192 aa).

Residue 47–51 coordinates GTP; sequence RIHSE. C52, C63, and C65 together coordinate Zn(2+). Residues Q68, 90–92, and T112 contribute to the GTP site; that span reads EGR. The active-site Proton acceptor is the D124. The active-site Nucleophile is R126. 2 residues coordinate GTP: T147 and K152.

This sequence belongs to the GTP cyclohydrolase II family. Zn(2+) is required as a cofactor.

The catalysed reaction is GTP + 4 H2O = 2,5-diamino-6-hydroxy-4-(5-phosphoribosylamino)-pyrimidine + formate + 2 phosphate + 3 H(+). It participates in cofactor biosynthesis; riboflavin biosynthesis; 5-amino-6-(D-ribitylamino)uracil from GTP: step 1/4. Its function is as follows. Catalyzes the conversion of GTP to 2,5-diamino-6-ribosylamino-4(3H)-pyrimidinone 5'-phosphate (DARP), formate and pyrophosphate. The protein is GTP cyclohydrolase-2 of Picrophilus torridus (strain ATCC 700027 / DSM 9790 / JCM 10055 / NBRC 100828 / KAW 2/3).